Consider the following 318-residue polypeptide: Ribose-phosphate pyrophosphokinase 2 (318 aa).

An ATP-binding site is contributed by 96 to 101 (RQDKKD). Residues aspartate 128, histidine 130, aspartate 139, and aspartate 143 each contribute to the Mg(2+) site. Histidine 130 is an ATP binding site. The segment at 212-227 (KDRVAILVDDMADTCG) is binding of phosphoribosylpyrophosphate.

The protein belongs to the ribose-phosphate pyrophosphokinase family. As to quaternary structure, homodimer. The active form is probably a hexamer composed of 3 homodimers. The cofactor is Mg(2+).

It catalyses the reaction D-ribose 5-phosphate + ATP = 5-phospho-alpha-D-ribose 1-diphosphate + AMP + H(+). Its pathway is metabolic intermediate biosynthesis; 5-phospho-alpha-D-ribose 1-diphosphate biosynthesis; 5-phospho-alpha-D-ribose 1-diphosphate from D-ribose 5-phosphate (route I): step 1/1. With respect to regulation, activated by magnesium and inorganic phosphate. Competitively or non-competitively inhibited by ADP, 2,3-bisphosphoglyceride or GDP. In terms of biological role, catalyzes the synthesis of phosphoribosylpyrophosphate (PRPP) that is essential for nucleotide synthesis. This Xenopus tropicalis (Western clawed frog) protein is Ribose-phosphate pyrophosphokinase 2 (prps2).